Consider the following 927-residue polypeptide: DNA polymerase alpha-binding protein (927 aa).

WD repeat units lie at residues 10-49 (FDFG…EEPE), 134-173 (KIDE…PNKV), 227-266 (AANR…LQKT), and 273-313 (STKA…IHYT). 3 positions are modified to phosphoserine: serine 377, serine 379, and serine 398. Phosphothreonine occurs at positions 401 and 411. Serine 463 is modified (phosphoserine). One copy of the WD 5 repeat lies at 699 to 739 (GSDNTLLLLSKWRSPEESKWLPILDSNMEIWKMSGGKETTD).

The protein resides in the nucleus. Functionally, accessory factor for DNA replication. It plays a role in accurately duplicating the genome in vivo. In Saccharomyces cerevisiae (strain ATCC 204508 / S288c) (Baker's yeast), this protein is DNA polymerase alpha-binding protein (CTF4).